A 119-amino-acid polypeptide reads, in one-letter code: Ribonuclease P protein component (119 aa).

It belongs to the RnpA family. In terms of assembly, consists of a catalytic RNA component (M1 or rnpB) and a protein subunit.

The catalysed reaction is Endonucleolytic cleavage of RNA, removing 5'-extranucleotides from tRNA precursor.. In terms of biological role, RNaseP catalyzes the removal of the 5'-leader sequence from pre-tRNA to produce the mature 5'-terminus. It can also cleave other RNA substrates such as 4.5S RNA. The protein component plays an auxiliary but essential role in vivo by binding to the 5'-leader sequence and broadening the substrate specificity of the ribozyme. The polypeptide is Ribonuclease P protein component (Syntrophus aciditrophicus (strain SB)).